Reading from the N-terminus, the 299-residue chain is MIHNNRLRIVMQKNWKLSNDSKDLLARCGIKINLYKKKLIAFSENMPIVYICVRDDDIPGLIMDGIVDVGIIGENVLEEEVLSRKLRSDNIDYIKLKRLDFGTCRLSLAIPLDKTYKDISCLNNSRIATSYPHLLKKYFDKNNITFKSCMLNGSVEVAPRAGLSDAICDLVSTGATLEANGLREVQVIFRSKACLICKVGDISSEKRNVLNTLLTRIQGVIKARESKYIMLHAPIKRLEEVVQLLHGAERPTILKLAGDNTRVAMHMVSSETLFWETMENLKLLGASSILVLPIEKMME.

This sequence belongs to the ATP phosphoribosyltransferase family. Long subfamily. In terms of assembly, equilibrium between an active dimeric form, an inactive hexameric form and higher aggregates. Interconversion between the various forms is largely reversible and is influenced by the natural substrates and inhibitors of the enzyme. The cofactor is Mg(2+).

The protein localises to the cytoplasm. It catalyses the reaction 1-(5-phospho-beta-D-ribosyl)-ATP + diphosphate = 5-phospho-alpha-D-ribose 1-diphosphate + ATP. It functions in the pathway amino-acid biosynthesis; L-histidine biosynthesis; L-histidine from 5-phospho-alpha-D-ribose 1-diphosphate: step 1/9. Feedback inhibited by histidine. Catalyzes the condensation of ATP and 5-phosphoribose 1-diphosphate to form N'-(5'-phosphoribosyl)-ATP (PR-ATP). Has a crucial role in the pathway because the rate of histidine biosynthesis seems to be controlled primarily by regulation of HisG enzymatic activity. This Buchnera aphidicola subsp. Schlechtendalia chinensis protein is ATP phosphoribosyltransferase.